The following is a 452-amino-acid chain: Elongation factor Tu, mitochondrial (452 aa).

The transit peptide at 1 to 43 (MAAATLLRATPRFSGLCASPTPFLQGRLRPLKAPASPFLCRGL) directs the protein to the mitochondrion. The region spanning 55–251 (KPHVNVGTIG…AVDTYIPVPT (197 aa)) is the tr-type G domain. The interval 64–71 (GHVDHGKT) is G1. GTP-binding residues include Asp-67, Gly-69, Lys-70, Thr-71, and Thr-72. Thr-71 provides a ligand contact to Mg(2+). N6-acetyllysine is present on Lys-79. Residue Lys-88 is modified to N6-acetyllysine; alternate. An N6-succinyllysine; alternate modification is found at Lys-88. Residues 105–109 (GITIN) are G2. The segment at 126-129 (DCPG) is G3. Asn-181, Asp-184, Ser-219, Ala-220, and Leu-221 together coordinate GTP. The segment at 181–184 (NKAD) is G4. Residues 219–221 (SAL) are G5. Lys-234 carries the post-translational modification N6-succinyllysine. At Lys-256 the chain carries N6-acetyllysine. Thr-278 carries the post-translational modification Phosphothreonine. An N6-succinyllysine modification is found at Lys-286. The residue at position 312 (Ser-312) is a Phosphoserine. Lys-361 and Lys-418 each carry N6-acetyllysine.

The protein belongs to the TRAFAC class translation factor GTPase superfamily. Classic translation factor GTPase family. EF-Tu/EF-1A subfamily. As to quaternary structure, interacts with NLRX1. Interacts with ATG16L1.

The protein resides in the mitochondrion. The catalysed reaction is GTP + H2O = GDP + phosphate + H(+). GTP hydrolase that promotes the GTP-dependent binding of aminoacyl-tRNA to the A-site of ribosomes during protein biosynthesis. Also plays a role in the regulation of autophagy and innate immunity. Recruits ATG5-ATG12 and NLRX1 at mitochondria and serves as a checkpoint of the RIGI-MAVS pathway. In turn, inhibits RLR-mediated type I interferon while promoting autophagy. The protein is Elongation factor Tu, mitochondrial (Tufm) of Mus musculus (Mouse).